A 268-amino-acid polypeptide reads, in one-letter code: Shikimate dehydrogenase (NADP(+)) (268 aa).

Shikimate-binding positions include 13–15 (SLS) and T60. The Proton acceptor role is filled by K64. Residue D76 participates in NADP(+) binding. Shikimate is bound by residues N85 and D100. Residues 124-128 (GAGGA), 148-153 (NRTMSR), and I209 each bind NADP(+). Y211 contacts shikimate. G232 is an NADP(+) binding site.

Belongs to the shikimate dehydrogenase family. Homodimer.

It carries out the reaction shikimate + NADP(+) = 3-dehydroshikimate + NADPH + H(+). The protein operates within metabolic intermediate biosynthesis; chorismate biosynthesis; chorismate from D-erythrose 4-phosphate and phosphoenolpyruvate: step 4/7. Functionally, involved in the biosynthesis of the chorismate, which leads to the biosynthesis of aromatic amino acids. Catalyzes the reversible NADPH linked reduction of 3-dehydroshikimate (DHSA) to yield shikimate (SA). The chain is Shikimate dehydrogenase (NADP(+)) from Staphylococcus haemolyticus (strain JCSC1435).